The following is a 182-amino-acid chain: NAD(P)H-quinone oxidoreductase subunit J (182 aa).

Belongs to the complex I 30 kDa subunit family. In terms of assembly, NDH-1 can be composed of about 15 different subunits; different subcomplexes with different compositions have been identified which probably have different functions.

It localises to the cellular thylakoid membrane. The enzyme catalyses a plastoquinone + NADH + (n+1) H(+)(in) = a plastoquinol + NAD(+) + n H(+)(out). It catalyses the reaction a plastoquinone + NADPH + (n+1) H(+)(in) = a plastoquinol + NADP(+) + n H(+)(out). In terms of biological role, NDH-1 shuttles electrons from an unknown electron donor, via FMN and iron-sulfur (Fe-S) centers, to quinones in the respiratory and/or the photosynthetic chain. The immediate electron acceptor for the enzyme in this species is believed to be plastoquinone. Couples the redox reaction to proton translocation, and thus conserves the redox energy in a proton gradient. Cyanobacterial NDH-1 also plays a role in inorganic carbon-concentration. This Synechococcus sp. (strain WH7803) protein is NAD(P)H-quinone oxidoreductase subunit J.